The following is a 404-amino-acid chain: Putative transporter AmpG 2 (404 aa).

12 consecutive transmembrane segments (helical) span residues 11–31, 49–69, 84–104, 109–129, 154–174, 177–197, 224–244, 261–281, 294–311, 315–337, 353–373, and 378–398; these read IYNILFILFISLPGGLIYLLT, IGLFSLVNFIHIFKFLWGPLL, YCLIFSLLSCICCVYILTGFN, FISFSLCLIILAFFSSIYDML, FRIGILISGSGALYLSTIISW, VYRTMAILCVPSLLLIIFYPL, WLIIVGFMLLYRLQDNFLAVM, LGYKAFGMCATIAGGFIGGFL, VLVYHALSSITFLLLYSY, ITTLYIAVFLQEFTKGLTMSPFF, IALITSIAYISTVLFGSISGY, and LGWGYFFAIASFCFIPAYILI.

This sequence belongs to the major facilitator superfamily.

Its subcellular location is the cell inner membrane. This is Putative transporter AmpG 2 (ampG2) from Rickettsia bellii (strain RML369-C).